Here is a 173-residue protein sequence, read N- to C-terminus: Protein C2 (173 aa).

A zinc finger spans residues 69–85; the sequence is CNCHFTIHHECNRGFSH.

It belongs to the geminiviridae transcriptional activator protein family. Monomer. Interacting with and inactivating host adenosine kinase 2 (ADK2) in the cytoplasm. Interacts with and inhibits host SNF1 kinase.

The protein resides in the host cytoplasm. Functionally, acts as a suppressor of RNA-mediated gene silencing, also known as post-transcriptional gene silencing (PTGS), a mechanism of plant viral defense that limits the accumulation of viral RNAs. Suppresses the host RNA silencing by inhibiting adenosine kinase 2 (ADK2), a kinase involved in a general methylation pathway. Also suppresses the host basal defense by interacting with and inhibiting SNF1 kinase, a key regulator of cell metabolism implicated in innate antiviral defense. Determines pathogenicity. In Beet curly top virus (strain California/Logan) (BCTV), this protein is Protein C2.